We begin with the raw amino-acid sequence, 241 residues long: Uracil-DNA glycosylase (241 aa).

Aspartate 71 acts as the Proton acceptor in catalysis.

The protein belongs to the uracil-DNA glycosylase (UDG) superfamily. UNG family.

Its subcellular location is the cytoplasm. It catalyses the reaction Hydrolyzes single-stranded DNA or mismatched double-stranded DNA and polynucleotides, releasing free uracil.. Its function is as follows. Excises uracil residues from the DNA which can arise as a result of misincorporation of dUMP residues by DNA polymerase or due to deamination of cytosine. This chain is Uracil-DNA glycosylase, found in Xanthomonas axonopodis pv. citri (strain 306).